Here is a 788-residue protein sequence, read N- to C-terminus: ATP-dependent 6-phosphofructokinase, platelet type (788 aa).

The residue at position 1 (methionine 1) is an N-acetylmethionine. Positions 1–399 (MSDQDSSTSS…NLNTYKRLAI (399 aa)) are N-terminal catalytic PFK domain 1. A phosphoserine mark is found at serine 2, serine 6, serine 12, and serine 21. ATP contacts are provided by residues glycine 34, 97–98 (RC), and 127–130 (GDGS). Residue aspartate 128 coordinates Mg(2+). Serine 142 is subject to Phosphoserine. Residues 173 to 175 (SID), arginine 210, 217 to 219 (MGR), glutamate 273, arginine 301, and 307 to 310 (HVQR) contribute to the substrate site. The Proton acceptor role is filled by aspartate 175. At serine 386 the chain carries Phosphoserine. Position 395 is an N6-acetyllysine (lysine 395). The tract at residues 400 to 411 (KEPDDKIPKSNC) is interdomain linker. A C-terminal regulatory PFK domain 2 region spans residues 412 to 788 (NVAIINVGAP…VHNHGELSAI (377 aa)). Position 481 (arginine 481) interacts with beta-D-fructose 2,6-bisphosphate. Position 486 is an N6-acetyllysine (lysine 486). Residues 538–542 (TVSNN), arginine 576, 583–585 (MGG), and glutamate 639 contribute to the beta-D-fructose 2,6-bisphosphate site. Serine 540 carries O-linked (GlcNAc) serine glycosylation. Phosphotyrosine is present on tyrosine 651. Residues arginine 665 and 671-674 (HMQQ) contribute to the beta-D-fructose 2,6-bisphosphate site. Position 688 is an N6-acetyllysine (lysine 688). Arginine 744 contributes to the beta-D-fructose 2,6-bisphosphate binding site.

This sequence belongs to the phosphofructokinase type A (PFKA) family. ATP-dependent PFK group I subfamily. Eukaryotic two domain clade 'E' sub-subfamily. Homo- and heterotetramers. Phosphofructokinase (PFK) enzyme functions as a tetramer composed of different combinations of 3 types of subunits, called PFKM (M), PFKL (L) and PFKP (P). The composition of the PFK tetramer differs according to the tissue type it is present in. The kinetic and regulatory properties of the tetrameric enzyme are dependent on the subunit composition, hence can vary across tissues. Interacts with ATG4B; promoting phosphorylation of ATG4B. Mg(2+) serves as cofactor. In terms of processing, glcNAcylation decreases enzyme activity. Phosphorylation at Ser-386 promotes interaction with ATG4B. In terms of tissue distribution, expressed at high level in neuroendocrine tissues.

The protein resides in the cytoplasm. It carries out the reaction beta-D-fructose 6-phosphate + ATP = beta-D-fructose 1,6-bisphosphate + ADP + H(+). The protein operates within carbohydrate degradation; glycolysis; D-glyceraldehyde 3-phosphate and glycerone phosphate from D-glucose: step 3/4. With respect to regulation, allosterically activated by ADP, AMP, or fructose 2,6-bisphosphate, and allosterically inhibited by ATP or citrate. Catalyzes the phosphorylation of D-fructose 6-phosphate to fructose 1,6-bisphosphate by ATP, the first committing step of glycolysis. This chain is ATP-dependent 6-phosphofructokinase, platelet type (Pfkp), found in Rattus norvegicus (Rat).